Consider the following 447-residue polypeptide: Phosphoglucosamine mutase (447 aa).

Serine 106 functions as the Phosphoserine intermediate in the catalytic mechanism. 4 residues coordinate Mg(2+): serine 106, aspartate 245, aspartate 247, and aspartate 249. Serine 106 carries the phosphoserine modification.

The protein belongs to the phosphohexose mutase family. Mg(2+) serves as cofactor. In terms of processing, activated by phosphorylation.

It carries out the reaction alpha-D-glucosamine 1-phosphate = D-glucosamine 6-phosphate. Functionally, catalyzes the conversion of glucosamine-6-phosphate to glucosamine-1-phosphate. The sequence is that of Phosphoglucosamine mutase from Cupriavidus metallidurans (strain ATCC 43123 / DSM 2839 / NBRC 102507 / CH34) (Ralstonia metallidurans).